A 314-amino-acid chain; its full sequence is MSHSNNFYRLETRLQSQTGKAIGDFGMIEDGDTVLVCMSGGKDSYTMLSVLMALQKRAPIKFKLIAMNLDQKQPGFPEHILPEYLKSVGVEYVIVEADTYSIVKEKVPEGKTTCSLCSRLRRGVIYRTAKELGANKIALGHHRDDIVQTFFLNMFFGGKMKAMPPKLSTDDGQHIVIRPLAYCSEKDIASYARAMEFPIIPCNLCGSQENLQRKKVSEMLQDWERQNPGRIDNIFSALRNVVPSHLADTDLFPFTGLATGLAKVDEASLFGETTFQQQPLMFAGNVEENRMEFVRFERPPAAAAAPAAEQAGTQ.

A PP-loop motif motif is present at residues S39–S44. [4Fe-4S] cluster-binding residues include C114, C117, and C205.

This sequence belongs to the TtcA family. In terms of assembly, homodimer. Mg(2+) serves as cofactor. Requires [4Fe-4S] cluster as cofactor.

The protein localises to the cytoplasm. It catalyses the reaction cytidine(32) in tRNA + S-sulfanyl-L-cysteinyl-[cysteine desulfurase] + AH2 + ATP = 2-thiocytidine(32) in tRNA + L-cysteinyl-[cysteine desulfurase] + A + AMP + diphosphate + H(+). It functions in the pathway tRNA modification. Functionally, catalyzes the ATP-dependent 2-thiolation of cytidine in position 32 of tRNA, to form 2-thiocytidine (s(2)C32). The sulfur atoms are provided by the cysteine/cysteine desulfurase (IscS) system. This Cupriavidus necator (strain ATCC 17699 / DSM 428 / KCTC 22496 / NCIMB 10442 / H16 / Stanier 337) (Ralstonia eutropha) protein is tRNA-cytidine(32) 2-sulfurtransferase.